The sequence spans 300 residues: Geranylgeranyl pyrophosphate synthase (300 aa).

Met1 is subject to N-acetylmethionine. Positions 25, 28, and 57 each coordinate isopentenyl diphosphate. Mg(2+) is bound by residues Asp64 and Asp68. Arg73 contacts dimethylallyl diphosphate. Residue Arg74 coordinates isopentenyl diphosphate. Dimethylallyl diphosphate is bound by residues Lys151, Thr152, Gln185, Lys202, and Lys212.

It belongs to the FPP/GGPP synthase family. As to quaternary structure, homohexamer; trimer of homodimers. It depends on Mg(2+) as a cofactor.

It is found in the cytoplasm. The protein localises to the perinuclear region. Its subcellular location is the myofibril. The protein resides in the sarcomere. It localises to the z line. It carries out the reaction isopentenyl diphosphate + dimethylallyl diphosphate = (2E)-geranyl diphosphate + diphosphate. The catalysed reaction is isopentenyl diphosphate + (2E)-geranyl diphosphate = (2E,6E)-farnesyl diphosphate + diphosphate. It catalyses the reaction isopentenyl diphosphate + (2E,6E)-farnesyl diphosphate = (2E,6E,10E)-geranylgeranyl diphosphate + diphosphate. It functions in the pathway isoprenoid biosynthesis; farnesyl diphosphate biosynthesis; farnesyl diphosphate from geranyl diphosphate and isopentenyl diphosphate: step 1/1. It participates in isoprenoid biosynthesis; geranyl diphosphate biosynthesis; geranyl diphosphate from dimethylallyl diphosphate and isopentenyl diphosphate: step 1/1. The protein operates within isoprenoid biosynthesis; geranylgeranyl diphosphate biosynthesis; geranylgeranyl diphosphate from farnesyl diphosphate and isopentenyl diphosphate: step 1/1. Its function is as follows. Catalyzes the trans-addition of the three molecules of isopentenyl diphosphate (IPP) onto dimethylallyl pyrophosphate (DMAPP) to form geranylgeranyl pyrophosphate, an important precursor of carotenoids and geranylated proteins. The sequence is that of Geranylgeranyl pyrophosphate synthase from Mus musculus (Mouse).